Consider the following 306-residue polypeptide: Bifunctional protein FolD (306 aa).

NADP(+) contacts are provided by residues 164 to 166, Ser189, and Thr230; that span reads GRS.

The protein belongs to the tetrahydrofolate dehydrogenase/cyclohydrolase family. Homodimer.

It catalyses the reaction (6R)-5,10-methylene-5,6,7,8-tetrahydrofolate + NADP(+) = (6R)-5,10-methenyltetrahydrofolate + NADPH. The catalysed reaction is (6R)-5,10-methenyltetrahydrofolate + H2O = (6R)-10-formyltetrahydrofolate + H(+). Its pathway is one-carbon metabolism; tetrahydrofolate interconversion. Functionally, catalyzes the oxidation of 5,10-methylenetetrahydrofolate to 5,10-methenyltetrahydrofolate and then the hydrolysis of 5,10-methenyltetrahydrofolate to 10-formyltetrahydrofolate. The sequence is that of Bifunctional protein FolD from Solibacter usitatus (strain Ellin6076).